The sequence spans 252 residues: Probable transcriptional regulatory protein Ava_1228 (252 aa).

Belongs to the TACO1 family.

It localises to the cytoplasm. In Trichormus variabilis (strain ATCC 29413 / PCC 7937) (Anabaena variabilis), this protein is Probable transcriptional regulatory protein Ava_1228.